Reading from the N-terminus, the 373-residue chain is 3 beta-hydroxysteroid dehydrogenase/Delta 5--&gt;4-isomerase type 3 (373 aa).

The active-site Proton acceptor is the Y155. NAD(+) is bound at residue K159. The helical transmembrane segment at 288-308 (VPILYWLAFLLETVSFLLSPI) threads the bilayer.

It belongs to the 3-beta-HSD family. In terms of tissue distribution, liver and kidney. Greater expression in liver.

It is found in the endoplasmic reticulum membrane. The protein resides in the mitochondrion membrane. It catalyses the reaction a 3beta-hydroxy-Delta(5)-steroid + NAD(+) = a 3-oxo-Delta(5)-steroid + NADH + H(+). The catalysed reaction is a 3-oxo-Delta(5)-steroid = a 3-oxo-Delta(4)-steroid. The protein operates within lipid metabolism; steroid biosynthesis. Functionally, 3-beta-HSD is a bifunctional enzyme, that catalyzes the oxidative conversion of Delta(5)-ene-3-beta-hydroxy steroid, and the oxidative conversion of ketosteroids. The 3-beta-HSD enzymatic system plays a crucial role in the biosynthesis of all classes of hormonal steroids. The sequence is that of 3 beta-hydroxysteroid dehydrogenase/Delta 5--&gt;4-isomerase type 3 (Hsd3b3) from Mus musculus (Mouse).